Consider the following 156-residue polypeptide: Ribosomal RNA large subunit methyltransferase H (156 aa).

S-adenosyl-L-methionine is bound by residues Leu73, Gly104, and 123–128; that span reads LSALTL.

This sequence belongs to the RNA methyltransferase RlmH family. Homodimer.

The protein localises to the cytoplasm. The enzyme catalyses pseudouridine(1915) in 23S rRNA + S-adenosyl-L-methionine = N(3)-methylpseudouridine(1915) in 23S rRNA + S-adenosyl-L-homocysteine + H(+). Specifically methylates the pseudouridine at position 1915 (m3Psi1915) in 23S rRNA. The chain is Ribosomal RNA large subunit methyltransferase H from Shewanella sp. (strain ANA-3).